A 241-amino-acid polypeptide reads, in one-letter code: HTH-type quorum-sensing regulator RhlR (241 aa).

Residues Leu-174–Gly-239 enclose the HTH luxR-type domain. A DNA-binding region (H-T-H motif) is located at residues Ser-198–Lys-217.

The protein belongs to the autoinducer-regulated transcriptional regulatory protein family. Homodimer in the absence of any acyl-L-homoserine lactone. The presence of the autoinducer C4-HSL has no significant effect on dimerization whereas N-(3-oxododecanoyl)-L-homoserine lactone (3O-C12-HSL), the LasR inducer, is able to dissociate the RhlR homodimers into monomers.

The protein resides in the cytoplasm. Its activity is regulated as follows. Activated by interaction with the autoinducer signal molecule N-butanoyl-L-homoserine lactone (C4-HSL or BHL), the product of the RhlI synthase. Is also activated by binding to rosmarinic acid (RA), a homoserine lactone mimic produced by plants, which induces a broad quorum sensing response, including the induction of all major quorum sensing controlled virulence factors. Rosmarinic acid secretion may be a plant defense mechanism to stimulate a premature quorum sensing response. In terms of biological role, quorum-sensing regulator that controls the expression of multiple virulence factors in response to extracellular signaling molecules called autoinducers. Involved, among others, in the transcriptional regulation of genes that are responsible for rhamnolipid surfactant biosynthesis. Acts by binding to a specific sequence in the rhlAB regulatory region, both in the presence and in the absence of its autoinducer. In the former case it activates transcription of the promoter, whereas in the latter it acts as a transcriptional repressor. Also regulates the expression of the rmlBDAC operon, encoding dTDP-L-rhamnose biosynthetic enzymes, by binding to the rml box in the promoter region. In addition, is involved in the regulation of the production of elastase (lasB) and pyocyanine. The chain is HTH-type quorum-sensing regulator RhlR from Pseudomonas aeruginosa (strain ATCC 15692 / DSM 22644 / CIP 104116 / JCM 14847 / LMG 12228 / 1C / PRS 101 / PAO1).